A 121-amino-acid chain; its full sequence is HTH-type transcriptional regulator Rv1152 (121 aa).

Positions Lys15–Phe83 constitute an HTH gntR-type domain. A DNA-binding region (H-T-H motif) is located at residues Val43–Arg62.

Its subcellular location is the cytoplasm. It is found in the secreted. The protein localises to the cell wall. In terms of biological role, transcriptional regulator that modulates resistance to vancomycin and aminoglycosides. Negatively regulates the expression of several genes responsive to vancomycin, resulting in decreased susceptibility of bacteria to vancomycin. Negatively regulates the expression of genes encoding the ribosome binding protein Hsp, the small subunit of sulfate adenylyltransferase CysD, the L-lysine-epsilon aminotransferase LAT and the protease HtpX. Also modulates purine metabolism and aminoglycoside antibiotic resistance. Negatively regulates the expression of purine metabolism-related genes and the accumulation of purine metabolites, which affects aminoglycoside antibiotic resistance. This chain is HTH-type transcriptional regulator Rv1152, found in Mycobacterium tuberculosis (strain ATCC 25618 / H37Rv).